The chain runs to 295 residues: Shikimate dehydrogenase (NADP(+)) (295 aa).

Residues 22–24 and serine 69 contribute to the shikimate site; that span reads SLS. The Proton acceptor role is filled by lysine 73. The shikimate site is built by asparagine 94 and aspartate 111. NADP(+) contacts are provided by residues 135–139 and valine 236; that span reads GAGGA. Tyrosine 238 lines the shikimate pocket. An NADP(+)-binding site is contributed by glycine 260.

This sequence belongs to the shikimate dehydrogenase family. In terms of assembly, homodimer.

It catalyses the reaction shikimate + NADP(+) = 3-dehydroshikimate + NADPH + H(+). It participates in metabolic intermediate biosynthesis; chorismate biosynthesis; chorismate from D-erythrose 4-phosphate and phosphoenolpyruvate: step 4/7. Functionally, involved in the biosynthesis of the chorismate, which leads to the biosynthesis of aromatic amino acids. Catalyzes the reversible NADPH linked reduction of 3-dehydroshikimate (DHSA) to yield shikimate (SA). The protein is Shikimate dehydrogenase (NADP(+)) of Streptococcus uberis (strain ATCC BAA-854 / 0140J).